A 151-amino-acid chain; its full sequence is Large ribosomal subunit protein uL13 (151 aa).

Belongs to the universal ribosomal protein uL13 family. In terms of assembly, part of the 50S ribosomal subunit.

This protein is one of the early assembly proteins of the 50S ribosomal subunit, although it is not seen to bind rRNA by itself. It is important during the early stages of 50S assembly. The chain is Large ribosomal subunit protein uL13 from Picosynechococcus sp. (strain ATCC 27264 / PCC 7002 / PR-6) (Agmenellum quadruplicatum).